Reading from the N-terminus, the 160-residue chain is Putative UPF0479 protein YNL339W-B (160 aa).

Helical transmembrane passes span 39–59 (IVFC…KVLQ) and 136–156 (VPMI…ISQH).

This sequence belongs to the UPF0479 family.

It localises to the membrane. This chain is Putative UPF0479 protein YNL339W-B, found in Saccharomyces cerevisiae (strain ATCC 204508 / S288c) (Baker's yeast).